The primary structure comprises 361 residues: Putative agmatine deiminase (361 aa).

Cys354 (amidino-cysteine intermediate) is an active-site residue.

Belongs to the agmatine deiminase family.

The catalysed reaction is agmatine + H2O = N-carbamoylputrescine + NH4(+). In Streptococcus pneumoniae (strain P1031), this protein is Putative agmatine deiminase.